The sequence spans 160 residues: 2-C-methyl-D-erythritol 2,4-cyclodiphosphate synthase (160 aa).

A divalent metal cation contacts are provided by Asp11 and His13. Residues 11 to 13 (DIH) and 37 to 38 (HS) contribute to the 4-CDP-2-C-methyl-D-erythritol 2-phosphate site. A divalent metal cation is bound at residue His45. 4-CDP-2-C-methyl-D-erythritol 2-phosphate contacts are provided by residues 59 to 61 (DIG), 135 to 138 (TTNE), and Arg145.

This sequence belongs to the IspF family. Homotrimer. The cofactor is a divalent metal cation.

It carries out the reaction 4-CDP-2-C-methyl-D-erythritol 2-phosphate = 2-C-methyl-D-erythritol 2,4-cyclic diphosphate + CMP. The protein operates within isoprenoid biosynthesis; isopentenyl diphosphate biosynthesis via DXP pathway; isopentenyl diphosphate from 1-deoxy-D-xylulose 5-phosphate: step 4/6. Involved in the biosynthesis of isopentenyl diphosphate (IPP) and dimethylallyl diphosphate (DMAPP), two major building blocks of isoprenoid compounds. Catalyzes the conversion of 4-diphosphocytidyl-2-C-methyl-D-erythritol 2-phosphate (CDP-ME2P) to 2-C-methyl-D-erythritol 2,4-cyclodiphosphate (ME-CPP) with a corresponding release of cytidine 5-monophosphate (CMP). This Synechococcus elongatus (strain ATCC 33912 / PCC 7942 / FACHB-805) (Anacystis nidulans R2) protein is 2-C-methyl-D-erythritol 2,4-cyclodiphosphate synthase.